The primary structure comprises 78 residues: Sec-independent protein translocase protein TatA (78 aa).

A helical transmembrane segment spans residues 1 to 21 (MFGRIGLPEILLILAIALIIF). Residues 50-78 (EVNEVEEEVKENKSSDVKENEDNKTEKST) are disordered. Residues 59-78 (KENKSSDVKENEDNKTEKST) are compositionally biased toward basic and acidic residues.

Belongs to the TatA/E family. Forms a complex with TatC.

The protein resides in the cell membrane. Functionally, part of the twin-arginine translocation (Tat) system that transports large folded proteins containing a characteristic twin-arginine motif in their signal peptide across membranes. TatA could form the protein-conducting channel of the Tat system. This is Sec-independent protein translocase protein TatA from Natranaerobius thermophilus (strain ATCC BAA-1301 / DSM 18059 / JW/NM-WN-LF).